A 1190-amino-acid chain; its full sequence is Laminin subunit gamma-2 (1190 aa).

Residues 1–21 form the signal peptide; the sequence is MPALWLRCGLCLALLLPAARA. 12 disulfide bridges follow: Cys-28–Cys-37, Cys-30–Cys-53, Cys-56–Cys-65, Cys-68–Cys-81, Cys-84–Cys-96, Cys-86–Cys-102, Cys-104–Cys-113, Cys-116–Cys-128, Cys-139–Cys-150, Cys-141–Cys-155, Cys-157–Cys-166, and Cys-169–Cys-184. Laminin EGF-like domains are found at residues 28–83, 84–130, and 139–186; these read CDCN…RCLP, CNCN…GCAQ, and CDCD…GCTQ. Positions 187-196 constitute a Laminin EGF-like 4; first part domain; that stretch reads CFCYGHSASC. The Laminin IV type A domain maps to 213–381; that stretch reads QDVDGWKAVQ…SGAPAPWVEQ (169 aa). N-linked (GlcNAc...) asparagine glycosylation is found at Asn-342 and Asn-362. Residues 382-415 form the Laminin EGF-like 4; second part domain; that stretch reads CVCPVGYKGQFCQDCASGYKRDSARLGPFGTCIP. Laminin EGF-like domains lie at 416–462, 463–517, and 518–573; these read CNCQ…SCKP, CPCR…PCQP, and CQCN…KCRA. 11 cysteine pairs are disulfide-bonded: Cys-463–Cys-471, Cys-465–Cys-482, Cys-485–Cys-494, Cys-497–Cys-515, Cys-518–Cys-532, Cys-520–Cys-539, Cys-542–Cys-551, Cys-554–Cys-571, Cys-574–Cys-586, Cys-576–Cys-592, and Cys-594–Cys-603. Residues 574 to 603 form the Laminin EGF-like 8; truncated domain; sequence CNCNPVGSEPVECRSDGSCVCKPGFGGLSC. The tract at residues 604 to 1190 is domain II and I; that stretch reads EHAALTSCPA…CYNTQALEQQ (587 aa). A coiled-coil region spans residues 613 to 718; that stretch reads ACYNQVKVQM…GSQYQNQVQD (106 aa). An O-linked (Xyl...) (chondroitin sulfate) serine glycan is attached at Ser-803. Coiled coils occupy residues 809–1073 and 1114–1190; these read AVVQ…AVQM and EERL…LEQQ. 2 N-linked (GlcNAc...) asparagine glycosylation sites follow: Asn-939 and Asn-1030.

In terms of assembly, laminin is a complex glycoprotein, consisting of three different polypeptide chains (alpha, beta, gamma), which are bound to each other by disulfide bonds into a cross-shaped molecule comprising one long and three short arms with globules at each end. Gamma-2 is a subunit of laminin-5 (laminin-332 or epiligrin/kalinin/nicein). In terms of processing, O-glycosylated; contains chondroitin sulfate (CS).

The protein localises to the secreted. It is found in the extracellular space. The protein resides in the extracellular matrix. It localises to the basement membrane. Binding to cells via a high affinity receptor, laminin is thought to mediate the attachment, migration and organization of cells into tissues during embryonic development by interacting with other extracellular matrix components. Ladsin exerts cell-scattering activity toward a wide variety of cells, including epithelial, endothelial, and fibroblastic cells. The polypeptide is Laminin subunit gamma-2 (LAMC2) (Equus caballus (Horse)).